The sequence spans 215 residues: Ras-related protein Rab-14 (215 aa).

Ala2 carries the N-acetylalanine modification. GTP contacts are provided by Gly21, Val22, Gly23, Lys24, Ser25, Cys26, Ala38, Asp39, Cys40, His42, and Thr43. Residue Ser25 coordinates Mg(2+). The Switch 1 signature appears at 42-47 (HTIGVE). Mg(2+)-binding residues include Thr43 and Asp66. The Switch 2 motif lies at 68 to 77 (AGQERFRAVT). GTP-binding residues include Gly69, Asn124, Lys125, Asp127, Ala155, and Lys156. The segment at 188 to 215 (SGVQHKPSAPQGGRLTSEPQPQREGCGC) is disordered. S-geranylgeranyl cysteine attachment occurs at residues Cys213 and Cys215. Residue Cys215 is modified to Cysteine methyl ester.

It belongs to the small GTPase superfamily. Rab family. Interacts with ZFYVE20. Interacts with KIF16B. Interacts (GTP-bound form) with RUFY1; the interaction recruits RUFY1 onto endosomal membranes. Interacts (GTP-bound form) with RAB11FIP1 (via its C-terminus); the interactions doesn't mediate RAB11FIP1 rectruitment to membranes. Interacts with RAB11FIP2. Requires Mg(2+) as cofactor.

It localises to the recycling endosome. The protein resides in the early endosome membrane. It is found in the golgi apparatus membrane. Its subcellular location is the golgi apparatus. The protein localises to the trans-Golgi network membrane. It localises to the cytoplasmic vesicle. The protein resides in the phagosome. The catalysed reaction is GTP + H2O = GDP + phosphate + H(+). With respect to regulation, regulated by guanine nucleotide exchange factors (GEFs) including DENND6A and DENND6B which promote the exchange of bound GDP for free GTP. Regulated by GTPase activating proteins (GAPs) which increase the GTP hydrolysis activity. Inhibited by GDP dissociation inhibitors (GDIs) which prevent Rab-GDP dissociation. In terms of biological role, the small GTPases Rab are key regulators of intracellular membrane trafficking, from the formation of transport vesicles to their fusion with membranes. Rabs cycle between an inactive GDP-bound form and an active GTP-bound form that is able to recruit to membranes different set of downstream effectors directly responsible for vesicle formation, movement, tethering and fusion. Involved in membrane trafficking between the Golgi complex and endosomes during early embryonic development. Regulates the Golgi to endosome transport of FGFR-containing vesicles during early development, a key process for developing basement membrane and epiblast and primitive endoderm lineages during early postimplantation development. May act by modulating the kinesin KIF16B-cargo association to endosomes. Regulates, together with its guanine nucleotide exchange factor DENND6A, the specific endocytic transport of ADAM10, N-cadherin/CDH2 shedding and cell-cell adhesion. Mediates endosomal tethering and fusion through the interaction with RUFY1 and RAB4B. Interaction with RAB11FIP1 may function in the process of neurite formation. The protein is Ras-related protein Rab-14 (RAB14) of Sus scrofa (Pig).